The sequence spans 468 residues: Factor XIIa inhibitor (468 aa).

A signal peptide spans 1–23 (MASRLTPLTLLLLLLLAGDRVTS). The segment at 27-60 (VGPGNLQEGESEGDSQKGGILDGESIQGNEDSPT) is disordered. 4 N-linked (GlcNAc...) asparagine glycosylation sites follow: Asn-65, Asn-176, Asn-227, and Asn-326. Disulfide bonds link Cys-97–Cys-396 and Cys-104–Cys-179.

This sequence belongs to the serpin family. N- and O-glycosylated.

The protein resides in the secreted. In terms of biological role, may play a potentially crucial role in regulating important physiological pathways including complement activation, blood coagulation, fibrinolysis and the generation of kinins. This Bos taurus (Bovine) protein is Factor XIIa inhibitor.